The primary structure comprises 718 residues: Phospholipid phosphatase-related protein type 3 (718 aa).

The next 3 helical transmembrane spans lie at 18 to 38 (LPCF…SLYF), 70 to 90 (LIPL…SIMV), and 133 to 153 (FVGV…VIQL). Asn-169 carries an N-linked (GlcNAc...) asparagine glycan. Helical transmembrane passes span 207 to 227 (HATL…SVIS), 233 to 253 (LKPI…LTQI), and 263 to 283 (VYAG…HAVG). A disordered region spans residues 313–347 (SVYQQNKSVSTDELGPPGRLEGAPRPVAREKTSLG). Residues 314–323 (VYQQNKSVST) are compositionally biased toward polar residues. N-linked (GlcNAc...) asparagine glycosylation occurs at Asn-318. Phosphoserine occurs at positions 322 and 353. At Thr-376 the chain carries Phosphothreonine. The segment at 416 to 488 (LEGRGLGLPD…GPRVILPPRA (73 aa)) is disordered. Ser-428 bears the Phosphoserine mark. Acidic residues predominate over residues 439–462 (MAEEEEEEEDEEEEEEEEEEEDEG). Ser-508 is subject to Phosphoserine. Residues 545–571 (APGAPGPKAAETASSSSASSDSSQYRS) show a composition bias toward low complexity. A disordered region spans residues 545–577 (APGAPGPKAAETASSSSASSDSSQYRSPSDRDS). Ser-641 carries the post-translational modification Phosphoserine. Positions 664 to 680 (GEGLPPLGAADGALGPG) are enriched in low complexity. The segment at 664–702 (GEGLPPLGAADGALGPGSRESTLRRHAGGLGLAEREAEA) is disordered.

The protein belongs to the PA-phosphatase related phosphoesterase family.

It is found in the membrane. In Homo sapiens (Human), this protein is Phospholipid phosphatase-related protein type 3.